Here is a 330-residue protein sequence, read N- to C-terminus: Phenylalanine--tRNA ligase alpha subunit (330 aa).

E246 is a Mg(2+) binding site.

The protein belongs to the class-II aminoacyl-tRNA synthetase family. Phe-tRNA synthetase alpha subunit type 1 subfamily. Tetramer of two alpha and two beta subunits. It depends on Mg(2+) as a cofactor.

The protein resides in the cytoplasm. It catalyses the reaction tRNA(Phe) + L-phenylalanine + ATP = L-phenylalanyl-tRNA(Phe) + AMP + diphosphate + H(+). The polypeptide is Phenylalanine--tRNA ligase alpha subunit (Sulfurovum sp. (strain NBC37-1)).